Here is a 272-residue protein sequence, read N- to C-terminus: Aurora kinase (272 aa).

The region spanning 10-263 (FEIGRLLGRG…LTEALNHPFI (254 aa)) is the Protein kinase domain. ATP contacts are provided by residues 16–24 (LGRGKFGQV) and Lys-39. The Proton acceptor role is filled by Asp-134.

The protein belongs to the protein kinase superfamily. Ser/Thr protein kinase family. Aurora subfamily.

Its subcellular location is the nucleus. The protein resides in the cytoplasm. The protein localises to the cytoskeleton. It is found in the spindle. It localises to the chromosome. Its subcellular location is the centromere. The protein resides in the kinetochore. The enzyme catalyses L-seryl-[protein] + ATP = O-phospho-L-seryl-[protein] + ADP + H(+). It catalyses the reaction L-threonyl-[protein] + ATP = O-phospho-L-threonyl-[protein] + ADP + H(+). In terms of biological role, component of the chromosomal passenger complex (CPC), a complex that acts as a key regulator of chromosome segregation and cytokinesis. Has a role in error-correction of aberrent kinetochore-microtubule attachments to ensure that sister kinetochores become bioriented and connect to opposite poles by promoting spindle assembly checkpoint signaling. The polypeptide is Aurora kinase (IPL1) (Encephalitozoon cuniculi (strain GB-M1) (Microsporidian parasite)).